A 442-amino-acid polypeptide reads, in one-letter code: Glutamyl-tRNA reductase (442 aa).

Substrate-binding positions include 50–53 (TCNR), S109, 114–116 (EPQ), and Q120. C51 (nucleophile) is an active-site residue. Position 189–194 (189–194 (GAGEMA)) interacts with NADP(+).

The protein belongs to the glutamyl-tRNA reductase family. As to quaternary structure, homodimer.

The enzyme catalyses (S)-4-amino-5-oxopentanoate + tRNA(Glu) + NADP(+) = L-glutamyl-tRNA(Glu) + NADPH + H(+). It participates in porphyrin-containing compound metabolism; protoporphyrin-IX biosynthesis; 5-aminolevulinate from L-glutamyl-tRNA(Glu): step 1/2. Its function is as follows. Catalyzes the NADPH-dependent reduction of glutamyl-tRNA(Glu) to glutamate 1-semialdehyde (GSA). The polypeptide is Glutamyl-tRNA reductase (Nitratidesulfovibrio vulgaris (strain DSM 19637 / Miyazaki F) (Desulfovibrio vulgaris)).